A 164-amino-acid polypeptide reads, in one-letter code: Rhomboid-related protein 1 (164 aa).

4 helical membrane passes run 10–30 (GFNALLQLMIGVPLEMVHGVL), 32–52 (ISLLYLAGVLAGSLTVSITDM), 56–76 (VVGGSGGVYALCSAHLANVVM), and 120–140 (PSFMAHLAGAVVGVSMGLTIL). S60 serves as the catalytic Nucleophile. H125 is an active-site residue.

The protein belongs to the peptidase S54 family.

It is found in the membrane. The catalysed reaction is Cleaves type-1 transmembrane domains using a catalytic dyad composed of serine and histidine that are contributed by different transmembrane domains.. In terms of biological role, may be involved in regulated intramembrane proteolysis and the subsequent release of functional polypeptides from their membrane anchors. The sequence is that of Rhomboid-related protein 1 (Rhbdl1) from Rattus norvegicus (Rat).